Consider the following 673-residue polypeptide: UvrABC system protein C (673 aa).

Residues 16 to 95 (VEPGVYKFRD…IKEFDPRFNV (80 aa)) form the GIY-YIG domain. A UVR domain is found at 208 to 243 (DKMVRELERRMHAAAEDLDFETAARLRDDVQALRRA). Positions 488-526 (RDEAERDELDGTAAGAPLVDDDETPTSRPGIDPTTGRPR) are disordered.

The protein belongs to the UvrC family. As to quaternary structure, interacts with UvrB in an incision complex.

The protein localises to the cytoplasm. In terms of biological role, the UvrABC repair system catalyzes the recognition and processing of DNA lesions. UvrC both incises the 5' and 3' sides of the lesion. The N-terminal half is responsible for the 3' incision and the C-terminal half is responsible for the 5' incision. In Nocardia farcinica (strain IFM 10152), this protein is UvrABC system protein C.